Reading from the N-terminus, the 173-residue chain is Transcription factor E (173 aa).

In terms of domain architecture, HTH TFE/IIEalpha-type spans 3 to 86 (DDPLVKSLLT…SWKFEEQEVI (84 aa)).

The protein belongs to the TFE family. As to quaternary structure, monomer. Interaction with RNA polymerase subunits RpoF and RpoE is necessary for Tfe stimulatory transcription activity. Able to interact with Tbp and RNA polymerase in the absence of DNA promoter. Interacts both with the preinitiation and elongation complexes.

Transcription factor that plays a role in the activation of archaeal genes transcribed by RNA polymerase. Facilitates transcription initiation by enhancing TATA-box recognition by TATA-box-binding protein (Tbp), and transcription factor B (Tfb) and RNA polymerase recruitment. Not absolutely required for transcription in vitro, but particularly important in cases where Tbp or Tfb function is not optimal. It dynamically alters the nucleic acid-binding properties of RNA polymerases by stabilizing the initiation complex and destabilizing elongation complexes. Seems to translocate with the RNA polymerase following initiation and acts by binding to the non template strand of the transcription bubble in elongation complexes. The chain is Transcription factor E from Methanobrevibacter smithii (strain ATCC 35061 / DSM 861 / OCM 144 / PS).